A 486-amino-acid polypeptide reads, in one-letter code: Serine/threonine-protein phosphatase 2A 56 kDa regulatory subunit alpha isoform (486 aa).

Residues 1–18 (MSSSSPPAGAASAAISAS) show a composition bias toward low complexity. Residues 1 to 52 (MSSSSPPAGAASAAISASEKVDGFTRKSVRKAQRQKRSQGSSQFRSQGSQAE) form a disordered region. S2 is subject to N-acetylserine. A compositionally biased stretch (basic residues) spans 27–37 (KSVRKAQRQKR). Positions 38–51 (SQGSSQFRSQGSQA) are enriched in low complexity. 3 positions are modified to phosphoserine: S41, S42, and S49.

It belongs to the phosphatase 2A regulatory subunit B56 family. In terms of assembly, PP2A consists of a common heterodimeric core enzyme, composed of a 36 kDa catalytic subunit (subunit C) and a 65 kDa constant regulatory subunit (PR65 or subunit A), that associates with a variety of regulatory subunits. Proteins that associate with the core dimer include three families of regulatory subunits B (the R2/B/PR55/B55, R3/B''/PR72/PR130/PR59 and R5/B'/B56 families), the 48 kDa variable regulatory subunit, viral proteins, and cell signaling molecules. Interacts with SGO1. Phosphorylated on serine residues. Widely expressed with the highest expression in heart and skeletal muscle.

The protein localises to the cytoplasm. Its subcellular location is the nucleus. It localises to the chromosome. It is found in the centromere. Functionally, the B regulatory subunit might modulate substrate selectivity and catalytic activity, and might also direct the localization of the catalytic enzyme to a particular subcellular compartment. This Homo sapiens (Human) protein is Serine/threonine-protein phosphatase 2A 56 kDa regulatory subunit alpha isoform (PPP2R5A).